The primary structure comprises 102 residues: UPF0213 protein XAC3202 (102 aa).

Residues 5-80 (KPWHLYLLLC…KRLPRARKLA (76 aa)) enclose the GIY-YIG domain.

It belongs to the UPF0213 family.

This Xanthomonas axonopodis pv. citri (strain 306) protein is UPF0213 protein XAC3202.